A 325-amino-acid chain; its full sequence is Cytochrome c1, heme protein, mitochondrial (325 aa).

Residues 1–84 (MAAAAASLRR…AVALHSAVSA (84 aa)) constitute a mitochondrion transit peptide. The Mitochondrial intermembrane portion of the chain corresponds to 85 to 287 (SDLELHPPSY…SEPEHDHRKR (203 aa)). Positions 108–209 (TSIRRGFQVY…IVRARHGGED (102 aa)) constitute a Cytochrome c domain. Residues C121, C124, H125, and M244 each coordinate heme c. Residues 288-308 (MGLKMLLMMGLLLPLTYAMKR) traverse the membrane as a helical segment. At 309-325 (HKWSVLKSRKLAYRPPK) the chain is on the mitochondrial matrix side.

It belongs to the cytochrome c family. In terms of assembly, component of the ubiquinol-cytochrome c oxidoreductase (cytochrome b-c1 complex, complex III, CIII), a multisubunit enzyme composed of 11 subunits. The complex is composed of 3 respiratory subunits cytochrome b, cytochrome c1 and Rieske protein UQCRFS1, 2 core protein subunits UQCRC1/QCR1 and UQCRC2/QCR2, and 6 low-molecular weight protein subunits UQCRH/QCR6, UQCRB/QCR7, UQCRQ/QCR8, UQCR10/QCR9, UQCR11/QCR10 and subunit 9, the cleavage product of Rieske protein UQCRFS1. The complex exists as an obligatory dimer and forms supercomplexes (SCs) in the inner mitochondrial membrane with NADH-ubiquinone oxidoreductase (complex I, CI) and cytochrome c oxidase (complex IV, CIV), resulting in different assemblies (supercomplex SCI(1)III(2)IV(1) and megacomplex MCI(2)III(2)IV(2)). Interacts with FLVCR2; this interaction occurs in the absence of heme and is disrupted upon heme binding. Requires heme c as cofactor.

It is found in the mitochondrion inner membrane. It carries out the reaction a quinol + 2 Fe(III)-[cytochrome c](out) = a quinone + 2 Fe(II)-[cytochrome c](out) + 2 H(+)(out). Component of the ubiquinol-cytochrome c oxidoreductase, a multisubunit transmembrane complex that is part of the mitochondrial electron transport chain which drives oxidative phosphorylation. The respiratory chain contains 3 multisubunit complexes succinate dehydrogenase (complex II, CII), ubiquinol-cytochrome c oxidoreductase (cytochrome b-c1 complex, complex III, CIII) and cytochrome c oxidase (complex IV, CIV), that cooperate to transfer electrons derived from NADH and succinate to molecular oxygen, creating an electrochemical gradient over the inner membrane that drives transmembrane transport and the ATP synthase. The cytochrome b-c1 complex catalyzes electron transfer from ubiquinol to cytochrome c, linking this redox reaction to translocation of protons across the mitochondrial inner membrane, with protons being carried across the membrane as hydrogens on the quinol. In the process called Q cycle, 2 protons are consumed from the matrix, 4 protons are released into the intermembrane space and 2 electrons are passed to cytochrome c. Cytochrome c1 is a catalytic core subunit containing a c-type heme. It transfers electrons from the [2Fe-2S] iron-sulfur cluster of the Rieske protein to cytochrome c. This is Cytochrome c1, heme protein, mitochondrial (Cyc1) from Mus musculus (Mouse).